The following is a 186-amino-acid chain: UPF0200 protein PF1294 (186 aa).

An ATP-binding site is contributed by 7–14 (GMPGSGKG).

It belongs to the UPF0200 family.

The sequence is that of UPF0200 protein PF1294 from Pyrococcus furiosus (strain ATCC 43587 / DSM 3638 / JCM 8422 / Vc1).